The primary structure comprises 237 residues: B3 domain-containing protein Os06g0194400 (237 aa).

2 disordered regions span residues 1-23 (MIEA…RQVE) and 38-82 (SAAV…LPEK). The TF-B3 DNA-binding region spans 139-230 (FVKPMLQSHV…KFKVYIIRAS (92 aa)).

The protein localises to the nucleus. This chain is B3 domain-containing protein Os06g0194400, found in Oryza sativa subsp. japonica (Rice).